The sequence spans 1309 residues: Clustered mitochondria protein homolog (1309 aa).

The segment at 1-34 (MLLNGDCPESLKKEAAAAEPPRENGLDEAGPGDE) is disordered. The span at 9 to 25 (ESLKKEAAAAEPPRENG) shows a compositional bias: basic and acidic residues. S279 and S281 each carry phosphoserine. A Clu domain is found at 335 to 577 (RAEDAYTSRL…RTFPPDLNFL (243 aa)). A compositionally biased stretch (polar residues) spans 636-651 (LETPSSLENGGPSSLE). Residues 636-674 (LETPSSLENGGPSSLESKSEDPPGQEAGSEEEGSSASGL) are disordered. Phosphoserine is present on residues S654, S664, and S723. TPR repeat units follow at residues 978–1011 (AFHF…FNNV), 1020–1053 (CACL…SERV), 1104–1137 (ALLD…STKY), and 1146–1179 (ALSH…YKTQ). Positions 1264 to 1278 (HQLQEASRNRDRAEE) are enriched in basic and acidic residues. The interval 1264 to 1309 (HQLQEASRNRDRAEEPMATEPAPAGAPGDLGSQPPAAKDPSPSVQG) is disordered. Positions 1279–1290 (PMATEPAPAGAP) are enriched in low complexity.

It belongs to the CLU family.

Its subcellular location is the cytoplasm. The protein localises to the cytoplasmic granule. Functionally, mRNA-binding protein involved in proper cytoplasmic distribution of mitochondria. Specifically binds mRNAs of nuclear-encoded mitochondrial proteins in the cytoplasm and regulates transport or translation of these transcripts close to mitochondria, playing a role in mitochondrial biogenesis. The polypeptide is Clustered mitochondria protein homolog (CLUH) (Homo sapiens (Human)).